Reading from the N-terminus, the 142-residue chain is Phosphoribosyl-AMP cyclohydrolase (142 aa).

Mg(2+) is bound at residue Asp-92. Cys-93 is a Zn(2+) binding site. 2 residues coordinate Mg(2+): Asp-94 and Asp-96. Cys-109 and Cys-116 together coordinate Zn(2+).

The protein belongs to the PRA-CH family. As to quaternary structure, homodimer. Mg(2+) is required as a cofactor. It depends on Zn(2+) as a cofactor.

The protein resides in the cytoplasm. The catalysed reaction is 1-(5-phospho-beta-D-ribosyl)-5'-AMP + H2O = 1-(5-phospho-beta-D-ribosyl)-5-[(5-phospho-beta-D-ribosylamino)methylideneamino]imidazole-4-carboxamide. It functions in the pathway amino-acid biosynthesis; L-histidine biosynthesis; L-histidine from 5-phospho-alpha-D-ribose 1-diphosphate: step 3/9. Its function is as follows. Catalyzes the hydrolysis of the adenine ring of phosphoribosyl-AMP. The polypeptide is Phosphoribosyl-AMP cyclohydrolase (Alcanivorax borkumensis (strain ATCC 700651 / DSM 11573 / NCIMB 13689 / SK2)).